Here is a 428-residue protein sequence, read N- to C-terminus: MTASASRPLLGCIADDFTGATDLANMLVKSGMRTVQTIGVPAESASIDADAIVVALKSRTIPAADAVAQSLAAYEWLRAQGCRQFFFKYCSTFDSTDAGNIGPVADALLDAAGGGFTIACPAFPENGRTIYRGHLFVGDVLLNESGMENHPLTPMKDANLVRVLQRQTSSKVGLIRYDTIARGAADVRACIAQLRADGVRIAIADALSDRDLYVLGEACAALPLVTGGSGIALGLPENFRRAAELAARDNAASLPRIDGTATVLAGSASKATNAQVAAWRATRPSFRIDPLAAARGEPVVDQALAFARSHLPEPVLIYATATPDEVKAVQQALGVEAAGELVERTLAAIAHGLRALGVRKFVVAGGETSGAVVQALGVKSLQIGAQIDPGVPATATIDTEPLGLALKSGNFGAVDFFDKALRALDGAA.

Residues S267, 365-368, and G409 each bind ATP; that span reads GGET.

This sequence belongs to the four-carbon acid sugar kinase family.

It carries out the reaction 3-dehydro-L-erythronate + ATP = 3-dehydro-4-O-phospho-L-erythronate + ADP + H(+). The catalysed reaction is 3-dehydro-D-erythronate + ATP = 3-dehydro-4-O-phospho-D-erythronate + ADP + H(+). In terms of biological role, catalyzes the ATP-dependent phosphorylation of 3-oxo-tetronate to 3-oxo-tetronate 4-phosphate. The protein is 3-oxo-tetronate kinase of Burkholderia multivorans (strain ATCC 17616 / 249).